We begin with the raw amino-acid sequence, 146 residues long: MORN repeat-containing protein 4 (146 aa).

4 MORN repeats span residues Tyr-16–Thr-38, Tyr-39–Arg-61, Tyr-62–Thr-84, and Phe-85–His-107.

In terms of assembly, interacts with MYO3A.

It localises to the cytoplasm. The protein localises to the cell projection. It is found in the filopodium tip. Its subcellular location is the stereocilium. In terms of biological role, plays a role in promoting axonal degeneration following neuronal injury by toxic insult or trauma. The chain is MORN repeat-containing protein 4 (MORN4) from Homo sapiens (Human).